Reading from the N-terminus, the 20-residue chain is Protein PR-L6 (20 aa).

This sequence belongs to the BetVI family.

The protein is Protein PR-L6 of Lupinus luteus (European yellow lupine).